The following is a 211-amino-acid chain: Imidazole glycerol phosphate synthase subunit HisH (211 aa).

Positions 3–211 (VVAVIDYEMG…VSQVREKIAA (209 aa)) constitute a Glutamine amidotransferase type-1 domain. Catalysis depends on Cys81, which acts as the Nucleophile. Active-site residues include His186 and Glu188.

Heterodimer of HisH and HisF.

The protein localises to the cytoplasm. The enzyme catalyses 5-[(5-phospho-1-deoxy-D-ribulos-1-ylimino)methylamino]-1-(5-phospho-beta-D-ribosyl)imidazole-4-carboxamide + L-glutamine = D-erythro-1-(imidazol-4-yl)glycerol 3-phosphate + 5-amino-1-(5-phospho-beta-D-ribosyl)imidazole-4-carboxamide + L-glutamate + H(+). It carries out the reaction L-glutamine + H2O = L-glutamate + NH4(+). The protein operates within amino-acid biosynthesis; L-histidine biosynthesis; L-histidine from 5-phospho-alpha-D-ribose 1-diphosphate: step 5/9. Its function is as follows. IGPS catalyzes the conversion of PRFAR and glutamine to IGP, AICAR and glutamate. The HisH subunit catalyzes the hydrolysis of glutamine to glutamate and ammonia as part of the synthesis of IGP and AICAR. The resulting ammonia molecule is channeled to the active site of HisF. The sequence is that of Imidazole glycerol phosphate synthase subunit HisH from Nostoc sp. (strain PCC 7120 / SAG 25.82 / UTEX 2576).